The chain runs to 356 residues: 5-formaminoimidazole-4-carboxamide-1-(beta)-D-ribofuranosyl 5'-monophosphate synthetase 2 (356 aa).

His27 and Ser94 together coordinate 5-amino-1-(5-phospho-beta-D-ribosyl)imidazole-4-carboxamide. The 233-residue stretch at 101 to 333 (RENFTGMAVP…YSDLMQKRLS (233 aa)) folds into the ATP-grasp domain. Residues 145–196 (PHDI…TRYD) and Glu226 contribute to the ATP site. 5-amino-1-(5-phospho-beta-D-ribosyl)imidazole-4-carboxamide is bound at residue Asn255. 2 residues coordinate Mg(2+): Glu293 and Glu306.

Belongs to the phosphohexose mutase family. The cofactor is Mg(2+). Requires Mn(2+) as cofactor.

It carries out the reaction 5-amino-1-(5-phospho-beta-D-ribosyl)imidazole-4-carboxamide + formate + ATP = 5-formamido-1-(5-phospho-D-ribosyl)imidazole-4-carboxamide + ADP + phosphate. The protein operates within purine metabolism; IMP biosynthesis via de novo pathway; 5-formamido-1-(5-phospho-D-ribosyl)imidazole-4-carboxamide from 5-amino-1-(5-phospho-D-ribosyl)imidazole-4-carboxamide (formate route): step 1/1. Functionally, catalyzes the ATP- and formate-dependent formylation of 5-aminoimidazole-4-carboxamide-1-beta-d-ribofuranosyl 5'-monophosphate (AICAR) to 5-formaminoimidazole-4-carboxamide-1-beta-d-ribofuranosyl 5'-monophosphate (FAICAR) in the absence of folates. In Methanosarcina mazei (strain ATCC BAA-159 / DSM 3647 / Goe1 / Go1 / JCM 11833 / OCM 88) (Methanosarcina frisia), this protein is 5-formaminoimidazole-4-carboxamide-1-(beta)-D-ribofuranosyl 5'-monophosphate synthetase 2.